The primary structure comprises 163 residues: Putative 4-hydroxy-4-methyl-2-oxoglutarate aldolase (163 aa).

Substrate is bound by residues 76–79 and arginine 98; that span reads GDML. Aspartate 99 contributes to the a divalent metal cation binding site.

It belongs to the class II aldolase/RraA-like family. As to quaternary structure, homotrimer. A divalent metal cation is required as a cofactor.

It carries out the reaction 4-hydroxy-4-methyl-2-oxoglutarate = 2 pyruvate. The enzyme catalyses oxaloacetate + H(+) = pyruvate + CO2. Its function is as follows. Catalyzes the aldol cleavage of 4-hydroxy-4-methyl-2-oxoglutarate (HMG) into 2 molecules of pyruvate. Also contains a secondary oxaloacetate (OAA) decarboxylase activity due to the common pyruvate enolate transition state formed following C-C bond cleavage in the retro-aldol and decarboxylation reactions. This is Putative 4-hydroxy-4-methyl-2-oxoglutarate aldolase from Pseudomonas entomophila (strain L48).